A 177-amino-acid polypeptide reads, in one-letter code: Bifunctional protein PyrR (177 aa).

Positions Val-99 to Thr-111 match the PRPP-binding motif.

Belongs to the purine/pyrimidine phosphoribosyltransferase family. PyrR subfamily.

The enzyme catalyses UMP + diphosphate = 5-phospho-alpha-D-ribose 1-diphosphate + uracil. Its function is as follows. Regulates the transcription of the pyrimidine nucleotide (pyr) operon in response to exogenous pyrimidines. Also displays a weak uracil phosphoribosyltransferase activity which is not physiologically significant. The polypeptide is Bifunctional protein PyrR (Microcystis aeruginosa (strain NIES-843 / IAM M-2473)).